We begin with the raw amino-acid sequence, 132 residues long: Prefoldin subunit alpha (132 aa).

The protein belongs to the prefoldin subunit alpha family. Heterohexamer of two alpha and four beta subunits.

The protein localises to the cytoplasm. Its function is as follows. Molecular chaperone capable of stabilizing a range of proteins. Seems to fulfill an ATP-independent, HSP70-like function in archaeal de novo protein folding. The protein is Prefoldin subunit alpha of Pyrobaculum islandicum (strain DSM 4184 / JCM 9189 / GEO3).